We begin with the raw amino-acid sequence, 914 residues long: Eukaryotic initiation factor 4F subunit p130 (914 aa).

Over residues 1–12 (MTDQRGPPPPHP) the composition is skewed to pro residues. Disordered regions lie at residues 1–84 (MTDQ…YNNR), 128–205 (PPYT…NEAV), 240–351 (ERKK…VNKS), and 457–535 (IARN…LVPS). Residues 26-44 (NQYSGANNSQPNNHYNENL) show a composition bias toward polar residues. Residues 59 to 73 (KNGKYGTNKYNNRNN) show a composition bias toward low complexity. S74 carries the phosphoserine modification. The segment covering 145-155 (PKTTKIEITTK) has biased composition (low complexity). Over residues 156–195 (TGERLNLKKFHEEKKASKGEEKNDGVEQKSKSGTPFEKEA) the composition is skewed to basic and acidic residues. Position 196 is a phosphothreonine (T196). The interaction with PAB1 stretch occupies residues 201–315 (ANEAVKDTLT…TGSVTKSVTF (115 aa)). The segment covering 240–263 (ERKKNGLISETEKKQETSNHDNTD) has biased composition (basic and acidic residues). 2 stretches are compositionally biased toward polar residues: residues 298 to 325 (SVKT…SSSQ) and 339 to 348 (ISDTTGGKTV). At T301 the chain carries Phosphothreonine. A compositionally biased stretch (basic and acidic residues) spans 496–529 (RMGDDRRSNRGYTSRKDREKAAEKAEEQAPKEEI). Position 503 is a phosphoserine (S503). The 244-residue stretch at 567 to 810 (ERKMKSLLNK…IDVKELREIK (244 aa)) folds into the MIF4G domain. The segment at 833 to 914 (QLRQKKNSQR…ALMNNDGDSD (82 aa)) is disordered. Positions 841–867 (QRSNSRFNNHNQSNSNRYSSNRRNMQN) are enriched in low complexity. Residues 868-886 (TQRDSFASTKTGSFRNNQR) are compositionally biased toward polar residues. Phosphoserine is present on S913.

It belongs to the eukaryotic initiation factor 4G family. In terms of assembly, component of the eIF4F complex, which composition varies with external and internal environmental conditions. It is composed of at least eIF4A (TIF1/TIF2), eIF4E (TIF45) and eIF4G (TIF4631 or TIF4632). Interacts with PAT1 in a RNA-dependent manner.

The protein localises to the cytoplasm. Functionally, component of the eIF4F complex, which interacts with the mRNA cap structure and serves as an initial point of assembly for the translation apparatus. Stimulates translation by interaction with polyadenylate-binding protein PAB1, bringing the 5'- and 3'-ends of the mRNA in proximity. The formation of this circular mRNP structure appears to be critical for the synergistic effects of the cap and the poly(A) tail in facilitating translation initiation, recycling of ribosomes, and mRNA stability. TIF4632 is probably essential when TIF4631 is missing. The polypeptide is Eukaryotic initiation factor 4F subunit p130 (Saccharomyces cerevisiae (strain ATCC 204508 / S288c) (Baker's yeast)).